The primary structure comprises 153 residues: UPF0178 protein Atu1478 (153 aa).

It belongs to the UPF0178 family.

The chain is UPF0178 protein Atu1478 from Agrobacterium fabrum (strain C58 / ATCC 33970) (Agrobacterium tumefaciens (strain C58)).